Here is a 927-residue protein sequence, read N- to C-terminus: Huntington interacting protein related 1 (927 aa).

An ENTH domain is found at 7–136 (AREVFVRAQL…TFHNKYPVVP (130 aa)). Residues 336–524 (RAVEDEKFAK…RESHANQLVQ (189 aa)) adopt a coiled-coil conformation. The 242-residue stretch at 673–914 (QTDIDKDVVG…ALRKQHYHMA (242 aa)) folds into the I/LWEQ domain.

Belongs to the SLA2 family.

Its subcellular location is the cytoplasm. The protein localises to the cytoskeleton. Its function is as follows. Regulates pre-synaptic vesicle recycling at neuromuscular junctions of mechanosensory neurons. Plays a role in maintaining a normal defecation cycle. This chain is Huntington interacting protein related 1 (hipr-1), found in Caenorhabditis elegans.